The chain runs to 265 residues: Interleukin-2 receptor subunit alpha (265 aa).

The first 21 residues, 1–21 (MDSYLLMWGLLTLIMVPGCFA), serve as a signal peptide directing secretion. Residues 22–84 (ELCDDDPPEI…SWDNQCQCTS (63 aa)) enclose the Sushi 1 domain. The Extracellular portion of the chain corresponds to 22 to 240 (ELCDDDPPEI…ETFIFTTEYQ (219 aa)). 3 cysteine pairs are disulfide-bonded: Cys-24-Cys-67, Cys-49-Cys-80, and Cys-51-Cys-82. 2 N-linked (GlcNAc...) asparagine glycosylation sites follow: Asn-70 and Asn-89. Residues 87–98 (TRNTTKQVTPQP) are compositionally biased toward polar residues. The interval 87-123 (TRNTTKQVTPQPEEQKERKTTEMQSPMQPVDQASLPG) is disordered. The Sushi 2 domain maps to 123–186 (GHCREPPPWE…WTQPQLICTG (64 aa)). 2 disulfides stabilise this stretch: Cys-125–Cys-168 and Cys-152–Cys-184. A disordered region spans residues 190-210 (TSQFPGEEKPQASPEGRPESE). Basic and acidic residues predominate over residues 195 to 209 (GEEKPQASPEGRPES). Residues 241 to 259 (VAVAGCVFLLISVLLLSGL) form a helical membrane-spanning segment. Residues 260–265 (TWQRRQ) lie on the Cytoplasmic side of the membrane.

Non-covalent dimer of an alpha and a beta subunit. IL2R exists in 3 different forms: a high affinity dimer, an intermediate affinity monomer (beta subunit), and a low affinity monomer (alpha subunit). The high and intermediate affinity forms also associate with a gamma subunit.

Its subcellular location is the membrane. Receptor for interleukin-2. The receptor is involved in the regulation of immune tolerance by controlling regulatory T cells (TREGs) activity. TREGs suppress the activation and expansion of autoreactive T-cells. The protein is Interleukin-2 receptor subunit alpha (IL2RA) of Pan troglodytes (Chimpanzee).